The sequence spans 415 residues: Protrudin (415 aa).

The interval 1–24 (MQTSDRDLSGPEASPSGMPEVLSE) is disordered. Over 1–66 (MQTSDRDLSG…AGDGVRYLLR (66 aa)) the chain is Cytoplasmic. Residues 1–92 (MQTSDRDLSG…LFLTLNEGAW (92 aa)) are sufficient for homooligomerization. The tract at residues 1–210 (MQTSDRDLSG…LYLLPLCWVL (210 aa)) is sufficient for localization to endoplasmic reticulum tubular network and for interactions with REEP1, REEP5, ATL1, ATL2, ATL3 and SPAST. Positions 51–64 (LEPLKDAGDGVRYL) are necessary for interaction with RAB11A and function in neurite outgrowth. A helical membrane pass occupies residues 67–87 (WQMPLCSLLTCLGLNILFLTL). A topological domain (lumenal) is located at residue asparagine 88. The helical transmembrane segment at 89–109 (EGAWYSMGALMISVPALLGYL) threads the bilayer. The Cytoplasmic segment spans residues 110–192 (QEVCRGQLPE…NPVVSSQFYG (83 aa)). The segment at residues 193-213 (ALLGMVCMLYLLPLCWVLALL) is an intramembrane region (helical). Residues 214–415 (NSTLFLGNGD…CASCNQTLSK (202 aa)) are Cytoplasmic-facing. Positions 254 to 290 (QGAGGRGLLDSSPAPTPTEDLTPGSVEEAEEAEPDEE) are disordered. Residues 275 to 365 (TPGSVEEAEE…GCAATFSVLK (91 aa)) form a necessary for interaction with KIF5A region. Acidic residues predominate over residues 280–290 (EEAEEAEPDEE). Residues 290–296 (EFKDAIE) are necessary for interaction with VAPA. The FYVE-type zinc finger occupies 348-414 (TNNFGNCAGC…VCASCNQTLS (67 aa)). Residues cysteine 354, cysteine 357, cysteine 370, cysteine 373, cysteine 378, cysteine 381, cysteine 406, and cysteine 409 each contribute to the Zn(2+) site.

As to quaternary structure, can form homooligomers (monomers, dimers and tetramers). Interacts with RAB11A (GDP-bound form); regulates RAB11A. Interacts with FKBP8; may negatively regulate ZFYVE27 phosphorylation. Isoform 1 interacts to a greater extent than isoform 2 with VAPB (via MSP domain). Isoform 1 interacts to a greater extent than isoform 2 with VAPA (via MSP domain). Interaction with VAPA may regulate ZFYVE27 retention in the endoplasmic reticulum and its function in cell projections formation. Interacts with ATL2, ATL3, SPAST and RTN3. Interacts with REEP1, REEP5 and ATL1. Interacts with RAB11B (GDP-bound form), SURF4, KIF5B and KIF5C. Isoform 1 and 2 interact with KIFA. In terms of processing, phosphorylated. Phosphorylation is induced by NGF through the MAPK/ERK pathway and modulates interaction with RAB11A. In terms of tissue distribution, astrocytes express both isoform 1 and isoform 2 and oligodendrocytes express only isoform 2 (at protein level). Isoform 1 is expressed specifically in the central nervous system and selectively in neuronal cells. Isoform 2 is expressed in cerebrum, cerebellum, spinal cord, heart, thymus, spleen, intestine and lung.

It is found in the recycling endosome membrane. The protein localises to the endoplasmic reticulum membrane. Its subcellular location is the cell projection. It localises to the growth cone membrane. Its function is as follows. Key regulator of RAB11-dependent vesicular trafficking during neurite extension through polarized membrane transport. Promotes axonal elongation and contributes to the establishment of neuronal cell polarity. Involved in nerve growth factor-induced neurite formation in VAPA-dependent manner. Contributes to both the formation and stabilization of the tubular ER network. Involved in ER morphogenesis by regulating the sheet-to-tubule balance and possibly the density of tubule interconnections. Acts as an adapter protein that facilitates the interaction of KIF5A with VAPA, VAPB, SURF4, RAB11A, RAB11B and RTN3 and the ZFYVE27-KIF5A complex contributes to the transport of these proteins in neurons. Can induce formation of neurite-like membrane protrusions in non-neuronal cells in a KIF5A/B-dependent manner. In Mus musculus (Mouse), this protein is Protrudin (Zfyve27).